Consider the following 127-residue polypeptide: Histone H2A (127 aa).

A compositionally biased stretch (basic residues) spans 1–20 (MSGRGKGGKAKTGGKAKSRS). A disordered region spans residues 1–23 (MSGRGKGGKAKTGGKAKSRSSRA). N-acetylserine is present on serine 2. Position 2 is a phosphoserine (serine 2). N6-acetyllysine; partial occurs at positions 6, 9, and 11. Glutamine 106 carries the N5-methylglutamine modification. Lysine 121 participates in a covalent cross-link: Glycyl lysine isopeptide (Lys-Gly) (interchain with G-Cter in ubiquitin).

Belongs to the histone H2A family. As to quaternary structure, the nucleosome is a histone octamer containing two molecules each of H2A, H2B, H3 and H4 assembled in one H3-H4 heterotetramer and two H2A-H2B heterodimers. The octamer wraps approximately 147 bp of DNA. Monoubiquitination of Lys-121 gives a specific tag for epigenetic transcriptional repression. In terms of processing, phosphorylation on Ser-2 is enhanced during mitosis. Phosphorylation on Ser-2 directly represses transcription.

The protein resides in the nucleus. Its subcellular location is the chromosome. Its function is as follows. Core component of nucleosome. Nucleosomes wrap and compact DNA into chromatin, limiting DNA accessibility to the cellular machineries which require DNA as a template. Histones thereby play a central role in transcription regulation, DNA repair, DNA replication and chromosomal stability. DNA accessibility is regulated via a complex set of post-translational modifications of histones, also called histone code, and nucleosome remodeling. The chain is Histone H2A (his-3) from Caenorhabditis elegans.